The sequence spans 81 residues: MNDAFSNAQHKLDALGLRCPEPVMMVRKTVRQMAAGETLLIIADDPATTRDIPSFCEFMDHTLIASETAQTPYQYLIKKGL.

The active-site Cysteine persulfide intermediate is the Cys-19.

This sequence belongs to the sulfur carrier protein TusA family.

Its subcellular location is the cytoplasm. Its function is as follows. Sulfur carrier protein which probably makes part of a sulfur-relay system. The sequence is that of Sulfur carrier protein TusA from Shewanella putrefaciens (strain CN-32 / ATCC BAA-453).